Consider the following 400-residue polypeptide: Nicotinate phosphoribosyltransferase (400 aa).

Phosphohistidine; by autocatalysis is present on H220.

This sequence belongs to the NAPRTase family. Post-translationally, transiently phosphorylated on a His residue during the reaction cycle. Phosphorylation strongly increases the affinity for substrates and increases the rate of nicotinate D-ribonucleotide production. Dephosphorylation regenerates the low-affinity form of the enzyme, leading to product release.

It catalyses the reaction nicotinate + 5-phospho-alpha-D-ribose 1-diphosphate + ATP + H2O = nicotinate beta-D-ribonucleotide + ADP + phosphate + diphosphate. It participates in cofactor biosynthesis; NAD(+) biosynthesis; nicotinate D-ribonucleotide from nicotinate: step 1/1. Its function is as follows. Catalyzes the synthesis of beta-nicotinate D-ribonucleotide from nicotinate and 5-phospho-D-ribose 1-phosphate at the expense of ATP. The sequence is that of Nicotinate phosphoribosyltransferase from Salmonella dublin (strain CT_02021853).